Reading from the N-terminus, the 194-residue chain is Prefoldin subunit 3 (194 aa).

It belongs to the prefoldin subunit alpha family. Heterohexamer of two PFD-alpha type and four PFD-beta type subunits. Interacts with itself. Interacts with Vhl and betaTub56D/tubulin beta-1 chain. Interacts with tubulin alpha-beta heterodimers by itself or in complex with Vhl. Does not interact with microtubules (MTs). As to expression, expressed in larval central nervous system (CNS) and pupal testis (at protein level).

Its subcellular location is the cytoplasm. Its function is as follows. Binds specifically to cytosolic chaperonin (c-CPN) and transfers target proteins to it. Binds to nascent polypeptide chain and promotes folding in an environment in which there are many competing pathways for nonnative proteins. Required for tubulin stability and spindle and centrosome formation in cooperation with Vhl. This is Prefoldin subunit 3 (mgr) from Drosophila melanogaster (Fruit fly).